The chain runs to 147 residues: Basic phospholipase A2 beta-bungarotoxin A1 chain (147 aa).

Residues 1-19 form the signal peptide; sequence MYPAHLLILSAVCVSLLGA. Residues 20–27 constitute a propeptide that is removed on maturation; that stretch reads ANIPPHPL. Intrachain disulfides connect cysteine 54/cysteine 146, cysteine 56/cysteine 72, cysteine 71/cysteine 127, cysteine 78/cysteine 120, cysteine 88/cysteine 113, and cysteine 106/cysteine 118. Tyrosine 55, glycine 57, and glycine 59 together coordinate Ca(2+). The active site involves histidine 75. Aspartate 76 is a binding site for Ca(2+). Residue aspartate 121 is part of the active site.

It belongs to the phospholipase A2 family. Group I subfamily. D49 sub-subfamily. Heterodimer; disulfide-linked. The A chains have phospholipase A2 activity and the B chains show homology with the basic protease inhibitors. It depends on Ca(2+) as a cofactor. In terms of tissue distribution, expressed by the venom gland.

It is found in the secreted. It carries out the reaction a 1,2-diacyl-sn-glycero-3-phosphocholine + H2O = a 1-acyl-sn-glycero-3-phosphocholine + a fatty acid + H(+). Functionally, snake venom phospholipase A2 (PLA2) that inhibits neuromuscular transmission by blocking acetylcholine release from the nerve termini. PLA2 catalyzes the calcium-dependent hydrolysis of the 2-acyl groups in 3-sn-phosphoglycerides. This is Basic phospholipase A2 beta-bungarotoxin A1 chain from Bungarus caeruleus (Indian krait).